We begin with the raw amino-acid sequence, 385 residues long: Sesquiterpene alcohol synthase (385 aa).

Asp-123 and Asp-127 together coordinate Mg(2+). Positions 123-127 match the DDXXD motif motif; sequence DDISD.

Belongs to the terpene synthase family. Requires Mg(2+) as cofactor. Specifically expressed in tissues lining the cuticle of the abdominal sternites of mature males.

The catalysed reaction is (2E,6E)-farnesyl diphosphate + H2O = (1S,6S,7R)-sesquipiperitol + diphosphate. The protein operates within pheromone biosynthesis. Sesquiterpene alcohol synthase that catalyzes the formation of (1S,6S,7R)-sesquipiperitol, a terpene intermediate in murgantiol biosynthesis, a male-released aggregation pheromone. This Murgantia histrionica (Harlequin bug) protein is Sesquiterpene alcohol synthase.